Reading from the N-terminus, the 109-residue chain is MAKDIGLDIPEPTKECDDINCPFHGELPVRGQIHVGTVVSAKMDRTVVIQQRREKLINKYQRYEKRQSKIHAHNPPCIDAKVGDIVTIAECRPLSKTKSYVVVKAEVKA.

The protein belongs to the universal ribosomal protein uS17 family. As to quaternary structure, part of the 30S ribosomal subunit.

In terms of biological role, one of the primary rRNA binding proteins, it binds specifically to the 5'-end of 16S ribosomal RNA. The polypeptide is Small ribosomal subunit protein uS17 (Methanococcoides burtonii (strain DSM 6242 / NBRC 107633 / OCM 468 / ACE-M)).